Here is a 492-residue protein sequence, read N- to C-terminus: Membrane-bound lytic murein transglycosylase F (492 aa).

The first 18 residues, 1–18 (MKGLFLRIIAIVALLLWA), serve as a signal peptide directing secretion. The tract at residues 19–268 (IDMVFPWQQI…RIEEKYFNHL (250 aa)) is non-LT domain. The tract at residues 270 to 492 (QFDYVDTRSY…DTLATTVTTQ (223 aa)) is LT domain. Glutamate 313 is a catalytic residue.

It in the N-terminal section; belongs to the bacterial solute-binding protein 3 family. The protein in the C-terminal section; belongs to the transglycosylase Slt family.

Its subcellular location is the cell outer membrane. It carries out the reaction Exolytic cleavage of the (1-&gt;4)-beta-glycosidic linkage between N-acetylmuramic acid (MurNAc) and N-acetylglucosamine (GlcNAc) residues in peptidoglycan, from either the reducing or the non-reducing ends of the peptidoglycan chains, with concomitant formation of a 1,6-anhydrobond in the MurNAc residue.. Murein-degrading enzyme that degrades murein glycan strands and insoluble, high-molecular weight murein sacculi, with the concomitant formation of a 1,6-anhydromuramoyl product. Lytic transglycosylases (LTs) play an integral role in the metabolism of the peptidoglycan (PG) sacculus. Their lytic action creates space within the PG sacculus to allow for its expansion as well as for the insertion of various structures such as secretion systems and flagella. The sequence is that of Membrane-bound lytic murein transglycosylase F from Pasteurella multocida (strain Pm70).